Reading from the N-terminus, the 216-residue chain is Large ribosomal subunit protein uL1 (216 aa).

The protein belongs to the universal ribosomal protein uL1 family. As to quaternary structure, component of the large ribosomal subunit.

It is found in the cytoplasm. Functionally, component of the large ribosomal subunit. The ribosome is a large ribonucleoprotein complex responsible for the synthesis of proteins in the cell. This is Large ribosomal subunit protein uL1 (rpl10a) from Danio rerio (Zebrafish).